Here is a 69-residue protein sequence, read N- to C-terminus: U2-agatoxin-Ao1c (69 aa).

The signal sequence occupies residues 1-20 (MKAIISLLLISAMVFSMIEA). Positions 21 to 34 (VPVEEGLQLFEGER) are excised as a propeptide. 3 cysteine pairs are disulfide-bonded: cysteine 36–cysteine 52, cysteine 43–cysteine 57, and cysteine 51–cysteine 67. The residue at position 68 (leucine 68) is a Leucine amide.

This sequence belongs to the neurotoxin 01 (U2-agtx) family. As to expression, expressed by the venom gland.

The protein resides in the secreted. Functionally, insect active toxin causing rapid but reversible paralysis in crickets. No activity shown in mammals. Does not show effect on mammalian voltage-gated calcium channels. In Agelena orientalis (Funnel-web spider), this protein is U2-agatoxin-Ao1c.